A 53-amino-acid chain; its full sequence is uncharacterized protein (53 aa).

The protein resides in the mitochondrion. This is an uncharacterized protein from Saccharomyces cerevisiae (strain ATCC 204508 / S288c) (Baker's yeast).